The primary structure comprises 423 residues: MKEIIARHKAGEHLGICSVCSAHPLVIESALLFDLNTDNKVLIEATSNQVNQFGGYTGMKPADFRDFVYGIAQEVGFPRERLILGGDHLGPNCWQNEPAAAAMEKSVELIKAYVAAGFSKIHLDASMSCADDPTPLDPMVVARRAAVLCKAAEETANEEQKCHLTYVIGTEVPVPGGEASTIGSVHVTREVDAARTLETHQIAFRESGLEEALSRVIAIVVQPGVEFDHTQIIHYQPQAAQALSAWIKETPMVYEAHSTDYQTRQAYRALVRDHYAILKVGPALTFALREAIFALAQMENELISPEQRSRVLEVIDEVMLNEPGYWKKYYRPTWSQAMVDIHFSLSDRIRYYWPHPRIRQSVEKLIANLNNVTLPLGLISQFMPVQFERLSEGVLTPTPHNLIIDKIQDVLRAYRFGCTPDVA.

It belongs to the GatZ/KbaZ family. GatZ subfamily. Forms a complex with GatY.

It functions in the pathway carbohydrate metabolism; D-tagatose 6-phosphate degradation; D-glyceraldehyde 3-phosphate and glycerone phosphate from D-tagatose 6-phosphate: step 2/2. Functionally, component of the tagatose-1,6-bisphosphate aldolase GatYZ that is required for full activity and stability of the Y subunit. Could have a chaperone-like function for the proper and stable folding of GatY. When expressed alone, GatZ does not show any aldolase activity. Is involved in the catabolism of galactitol. This chain is D-tagatose-1,6-bisphosphate aldolase subunit GatZ, found in Salmonella paratyphi B (strain ATCC BAA-1250 / SPB7).